The chain runs to 81 residues: Short neurotoxin 2 (81 aa).

A signal peptide spans 1-21 (MKTLLLTLVVVTIVCLDLGYT). 4 disulfide bridges follow: C24–C43, C38–C60, C62–C73, and C74–C79.

It belongs to the three-finger toxin family. Short-chain subfamily. Type I alpha-neurotoxin sub-subfamily. In terms of tissue distribution, expressed by the venom gland.

The protein localises to the secreted. Binds to muscle nicotinic acetylcholine receptor (nAChR) and inhibit acetylcholine from binding to the receptor, thereby impairing neuromuscular transmission. The protein is Short neurotoxin 2 of Drysdalia coronoides (White-lipped snake).